Reading from the N-terminus, the 82-residue chain is U17-hexatoxin-Hi1a (82 aa).

Positions 1–21 (MKTIFAVTLLLFAIYVPECMP) are cleaved as a signal peptide. 5 disulfides stabilise this stretch: Cys-22/Cys-33, Cys-27/Cys-48, Cys-32/Cys-61, Cys-58/Cys-69, and Cys-63/Cys-75.

Expressed by the venom gland.

The protein resides in the secreted. In terms of biological role, probable ion channel inhibitor. This Hadronyche infensa (Fraser island funnel-web spider) protein is U17-hexatoxin-Hi1a.